Here is a 434-residue protein sequence, read N- to C-terminus: MVVKFTKSEALHKEALEHIVGGVNSPSRSFKAVGGGAPIAMERGKGAYFWDVDGNKYIDYLAAYGPIITGHAHPHITKAITTAAENGVLYGTPTALEVKFAKMLKEAMPALDKVRFVNSGTEAVMTTIRVARAYTGRTKIMKFAGCYHGHSDLVLVAAGSGPSTLGTPDSAGVPQSIAQEVITVPFNNVETLKEALDKWGHEVAAILVEPIVGNFGIVEPKPGFLEKVNELVHEAGALVIYDEVITAFRFMYGGAQDLLGVTPDLTALGKVIGGGLPIGAYGGKKEIMEQVAPLGPAYQAGTMAGNPASMASGIACLEVLQQEGLYEKLDELGAMLEKGILEQAAKHNIDITLNRLKGALTVYFTTNTIEDYDAAQDTDGEMFGKFFKLMLQEGVNLAPSKYEAWFLTTEHTKEDIEYTIEAVGRAFAALADNK.

Lys-270 carries the N6-(pyridoxal phosphate)lysine modification.

Belongs to the class-III pyridoxal-phosphate-dependent aminotransferase family. HemL subfamily. As to quaternary structure, homodimer. Pyridoxal 5'-phosphate serves as cofactor.

The protein resides in the cytoplasm. The enzyme catalyses (S)-4-amino-5-oxopentanoate = 5-aminolevulinate. Its pathway is porphyrin-containing compound metabolism; protoporphyrin-IX biosynthesis; 5-aminolevulinate from L-glutamyl-tRNA(Glu): step 2/2. This is Glutamate-1-semialdehyde 2,1-aminomutase 1 from Bacillus anthracis (strain A0248).